Consider the following 475-residue polypeptide: Ribulose bisphosphate carboxylase large chain (475 aa).

Positions 1–2 (MS) are excised as a propeptide. At Pro-3 the chain carries N-acetylproline. The residue at position 14 (Lys-14) is an N6,N6,N6-trimethyllysine. Substrate-binding residues include Asn-123 and Thr-173. Catalysis depends on Lys-175, which acts as the Proton acceptor. Position 177 (Lys-177) interacts with substrate. Mg(2+)-binding residues include Lys-201, Asp-203, and Glu-204. Lys-201 is subject to N6-carboxylysine. His-294 functions as the Proton acceptor in the catalytic mechanism. Positions 295, 327, and 379 each coordinate substrate.

This sequence belongs to the RuBisCO large chain family. Type I subfamily. Heterohexadecamer of 8 large chains and 8 small chains; disulfide-linked. The disulfide link is formed within the large subunit homodimers. Requires Mg(2+) as cofactor. The disulfide bond which can form in the large chain dimeric partners within the hexadecamer appears to be associated with oxidative stress and protein turnover.

The protein localises to the plastid. Its subcellular location is the chloroplast. The enzyme catalyses 2 (2R)-3-phosphoglycerate + 2 H(+) = D-ribulose 1,5-bisphosphate + CO2 + H2O. It carries out the reaction D-ribulose 1,5-bisphosphate + O2 = 2-phosphoglycolate + (2R)-3-phosphoglycerate + 2 H(+). Functionally, ruBisCO catalyzes two reactions: the carboxylation of D-ribulose 1,5-bisphosphate, the primary event in carbon dioxide fixation, as well as the oxidative fragmentation of the pentose substrate in the photorespiration process. Both reactions occur simultaneously and in competition at the same active site. This is Ribulose bisphosphate carboxylase large chain from Tsuga heterophylla (Western hemlock).